Consider the following 246-residue polypeptide: 4-hydroxy-tetrahydrodipicolinate reductase (246 aa).

NAD(+) is bound by residues 8-13, 74-76, and 101-104; these read GAKGRM, GTT, and APNF. The active-site Proton donor/acceptor is the histidine 131. (S)-2,3,4,5-tetrahydrodipicolinate is bound at residue histidine 132. The active-site Proton donor is the lysine 135. Position 141-142 (141-142) interacts with (S)-2,3,4,5-tetrahydrodipicolinate; that stretch reads GT.

It belongs to the DapB family.

It is found in the cytoplasm. It catalyses the reaction (S)-2,3,4,5-tetrahydrodipicolinate + NAD(+) + H2O = (2S,4S)-4-hydroxy-2,3,4,5-tetrahydrodipicolinate + NADH + H(+). It carries out the reaction (S)-2,3,4,5-tetrahydrodipicolinate + NADP(+) + H2O = (2S,4S)-4-hydroxy-2,3,4,5-tetrahydrodipicolinate + NADPH + H(+). The protein operates within amino-acid biosynthesis; L-lysine biosynthesis via DAP pathway; (S)-tetrahydrodipicolinate from L-aspartate: step 4/4. Its function is as follows. Catalyzes the conversion of 4-hydroxy-tetrahydrodipicolinate (HTPA) to tetrahydrodipicolinate. This is 4-hydroxy-tetrahydrodipicolinate reductase from Cutibacterium acnes (strain DSM 16379 / KPA171202) (Propionibacterium acnes).